The sequence spans 259 residues: Histidinol-phosphatase (259 aa).

Mg(2+)-binding residues include Glu66, Asp82, Ile84, Asp85, and Asp207. Glu66 lines the substrate pocket. Substrate contacts are provided by residues 84 to 87 (IDGT) and Asp207.

The protein belongs to the inositol monophosphatase superfamily. It depends on Mg(2+) as a cofactor.

The catalysed reaction is L-histidinol phosphate + H2O = L-histidinol + phosphate. It functions in the pathway amino-acid biosynthesis; L-histidine biosynthesis; L-histidine from 5-phospho-alpha-D-ribose 1-diphosphate: step 8/9. In terms of biological role, catalyzes the dephosphorylation of histidinol-phosphate to histidinol, the direct precursor of histidine. The chain is Histidinol-phosphatase (hisN) from Chlorobaculum parvum (strain DSM 263 / NCIMB 8327) (Chlorobium vibrioforme subsp. thiosulfatophilum).